Reading from the N-terminus, the 455-residue chain is tRNA-2-methylthio-N(6)-dimethylallyladenosine synthase (455 aa).

The MTTase N-terminal domain maps to 18-133 (KKLFIETYGC…LPELIAAVEA (116 aa)). Positions 27, 63, 97, 171, 175, and 178 each coordinate [4Fe-4S] cluster. Residues 157–390 (CGNHISGFVS…IALQNRLSAE (234 aa)) form the Radical SAM core domain. Residues 393-455 (QRCIGKTYEV…SSATLKGEEV (63 aa)) form the TRAM domain.

The protein belongs to the methylthiotransferase family. MiaB subfamily. In terms of assembly, monomer. [4Fe-4S] cluster serves as cofactor.

The protein resides in the cytoplasm. It carries out the reaction N(6)-dimethylallyladenosine(37) in tRNA + (sulfur carrier)-SH + AH2 + 2 S-adenosyl-L-methionine = 2-methylsulfanyl-N(6)-dimethylallyladenosine(37) in tRNA + (sulfur carrier)-H + 5'-deoxyadenosine + L-methionine + A + S-adenosyl-L-homocysteine + 2 H(+). Catalyzes the methylthiolation of N6-(dimethylallyl)adenosine (i(6)A), leading to the formation of 2-methylthio-N6-(dimethylallyl)adenosine (ms(2)i(6)A) at position 37 in tRNAs that read codons beginning with uridine. This Bacteroides thetaiotaomicron (strain ATCC 29148 / DSM 2079 / JCM 5827 / CCUG 10774 / NCTC 10582 / VPI-5482 / E50) protein is tRNA-2-methylthio-N(6)-dimethylallyladenosine synthase.